Here is a 387-residue protein sequence, read N- to C-terminus: 3-ketoacyl-CoA thiolase (387 aa).

Cysteine 91 acts as the Acyl-thioester intermediate in catalysis. Active-site proton acceptor residues include histidine 343 and cysteine 373.

This sequence belongs to the thiolase-like superfamily. Thiolase family. As to quaternary structure, heterotetramer of two alpha chains (FadB) and two beta chains (FadA).

The protein localises to the cytoplasm. The catalysed reaction is an acyl-CoA + acetyl-CoA = a 3-oxoacyl-CoA + CoA. It participates in lipid metabolism; fatty acid beta-oxidation. Catalyzes the final step of fatty acid oxidation in which acetyl-CoA is released and the CoA ester of a fatty acid two carbons shorter is formed. This Shigella sonnei (strain Ss046) protein is 3-ketoacyl-CoA thiolase.